Reading from the N-terminus, the 378-residue chain is MADIQLSKYHVSKDIGFLLEPLQDVLPDYFEPWNRLAKSLPELVASHKFRDAVKEMPLLDQSKLAGYRQKRLAHLQLVLITSGYLWQEGEGGAVQRLPECVSKPLWNVSNDLGLKPVLTFADICLTNCKVKNGDIEVMYNLPGGAGTEWFLKVCGLVELAFGKSGQAIQNVLDGAKANDKAKMASGFTDLTAAIGNMQTALARMNENLTPEHFYNGVRPFLNGFGGPASPISGGLVYEGVSDKPVTMIGGSAAQSSTMQVLDGLLGITHSPEKQAFLDEIRNYMPPSHKQMLADLTNMPRKVPQVVAETKDANLTKAFNGCVAAFVQYRSYHIQVVTKYIVTASKSDSPKSLAYKDTGKSDLIPFLKEVRDDTEKVQQ.

Histidine 332 serves as a coordination point for heme.

It belongs to the indoleamine 2,3-dioxygenase family. In terms of assembly, homodimer. It depends on heme as a cofactor.

In terms of biological role, serves a reserve supply of oxygen and facilitates the movement of oxygen within muscles. The chain is Myoglobin from Haliotis madaka (Giant abalone).